The following is a 964-amino-acid chain: Protein translocase subunit SecA (964 aa).

Residues Gln86, 104–108 (GEGKT), and Asp494 each bind ATP. A disordered region spans residues 848-964 (AESADTIAVA…YKMCHGQNEK (117 aa)). Residues 871-882 (AEGEVEEEDEDT) are compositionally biased toward acidic residues. Residues 889 to 900 (AESAAASGAGES) show a composition bias toward low complexity. The Zn(2+) site is built by Cys947, Cys949, Cys958, and His959.

It belongs to the SecA family. In terms of assembly, monomer and homodimer. Part of the essential Sec protein translocation apparatus which comprises SecA, SecYEG and auxiliary proteins SecDF. Other proteins may also be involved. Requires Zn(2+) as cofactor.

The protein resides in the cell membrane. It is found in the cytoplasm. The enzyme catalyses ATP + H2O + cellular proteinSide 1 = ADP + phosphate + cellular proteinSide 2.. Its function is as follows. Part of the Sec protein translocase complex. Interacts with the SecYEG preprotein conducting channel. Has a central role in coupling the hydrolysis of ATP to the transfer of proteins into and across the cell membrane, serving as an ATP-driven molecular motor driving the stepwise translocation of polypeptide chains across the membrane. This chain is Protein translocase subunit SecA, found in Bifidobacterium longum (strain DJO10A).